Here is a 506-residue protein sequence, read N- to C-terminus: Trans-cinnamate 4-monooxygenase C4H1 (506 aa).

Short sequence motifs (nuclear localization signal) lie at residues 161-168 (VKKMPESA) and 247-254 (QRRLQLFK). A heme-binding site is contributed by C448.

This sequence belongs to the cytochrome P450 family. The cofactor is heme.

The protein resides in the nucleus. It catalyses the reaction (E)-cinnamate + reduced [NADPH--hemoprotein reductase] + O2 = (E)-4-coumarate + oxidized [NADPH--hemoprotein reductase] + H2O + H(+). It participates in phenylpropanoid metabolism; trans-4-coumarate biosynthesis; trans-4-coumarate from trans-cinnamate: step 1/1. Functionally, component of the floral volatile benzenoid/phenylpropanoid (FVBP) biosynthetic pathway that controls carbon flux to pigments essential for pollination or UV protection, to numerous pytoalexins synthesized by plants when challenged by pathogens, and to lignins. This is Trans-cinnamate 4-monooxygenase C4H1 from Petunia hybrida (Petunia).